The following is a 319-amino-acid chain: Class I histocompatibility antigen, Non-RT1.A alpha-1 chain (319 aa).

Positions 1 to 24 (MGAMAPRTLLLLLAAVLAPTQTWA) are cleaved as a signal peptide. The alpha-1 stretch occupies residues 25-114 (GSHSLRYFHT…LLSYYNQSEG (90 aa)). Residues 25-307 (GSHSLRYFHT…WEPSPSTDSN (283 aa)) lie on the Extracellular side of the membrane. The N-linked (GlcNAc...) asparagine glycan is linked to Asn-110. The segment at 115–206 (GSHTIQRMYG…ERGKETLLRS (92 aa)) is alpha-2. Cystine bridges form between Cys-125/Cys-188 and Cys-227/Cys-283. The interval 207-298 (DPPEAHVTLH…GLPEPLSQRW (92 aa)) is alpha-3. Residues 209-295 (PEAHVTLHPR…EHEGLPEPLS (87 aa)) enclose the Ig-like C1-type domain. Asn-280 carries N-linked (GlcNAc...) asparagine glycosylation. Positions 299-307 (EPSPSTDSN) are connecting peptide. The chain crosses the membrane as a helical span at residues 308-319 (LLLLFLELWQFL).

The protein belongs to the MHC class I family. Heterodimer of an alpha chain and a beta chain (beta-2-microglobulin).

The protein localises to the membrane. Functionally, involved in the presentation of foreign antigens to the immune system. The polypeptide is Class I histocompatibility antigen, Non-RT1.A alpha-1 chain (RT1-Aw2) (Rattus norvegicus (Rat)).